Here is a 65-residue protein sequence, read N- to C-terminus: Putative beta-neurotoxin RjAa8 (65 aa).

The LCN-type CS-alpha/beta domain occupies 1-64 (KEGYPMGRDG…VWDSSTNKCG (64 aa)). 4 disulfides stabilise this stretch: cysteine 11–cysteine 63, cysteine 15–cysteine 37, cysteine 22–cysteine 44, and cysteine 26–cysteine 46.

It belongs to the long (4 C-C) scorpion toxin superfamily. Sodium channel inhibitor family. Beta subfamily. As to expression, expressed by the venom gland.

It is found in the secreted. Its function is as follows. Beta toxins bind voltage-independently at site-4 of sodium channels (Nav) and shift the voltage of activation toward more negative potentials thereby affecting sodium channel activation and promoting spontaneous and repetitive firing. The protein is Putative beta-neurotoxin RjAa8 of Rhopalurus junceus (Caribbean blue scorpion).